A 439-amino-acid polypeptide reads, in one-letter code: Probable threonine protease PRSS50 (439 aa).

2 disordered regions span residues 1 to 22 and 48 to 130; these read MEPWCGAEVRGQGPQGPRVPGA and ERIR…TMAP. Residues 1–47 form the signal peptide; sequence MEPWCGAEVRGQGPQGPRVPGASRSRSRALLLLLLLLLLLLPRRPAG. Positions 9–21 are enriched in low complexity; sequence VRGQGPQGPRVPG. The Extracellular portion of the chain corresponds to 48–415; that stretch reads ERIRPRRPPR…WIWDRLSGEP (368 aa). Basic residues predominate over residues 51 to 61; sequence RPRRPPRHAHP. Residues 112–127 are compositionally biased toward low complexity; the sequence is QAQTNQTTTAPPNSQT. 2 N-linked (GlcNAc...) asparagine glycosylation sites follow: asparagine 116 and asparagine 187. The 256-residue stretch at 157–412 folds into the Peptidase S1 domain; the sequence is FCGSSHEPDP…YRPWIWDRLS (256 aa). An intrachain disulfide couples cysteine 192 to cysteine 208. Histidine 207 serves as the catalytic Charge relay system. The N-linked (GlcNAc...) asparagine glycan is linked to asparagine 226. Aspartate 260 serves as the catalytic Charge relay system. 3 disulfide bridges follow: cysteine 294–cysteine 370, cysteine 327–cysteine 350, and cysteine 360–cysteine 388. The Charge relay system role is filled by threonine 364. A helical membrane pass occupies residues 416-436; sequence LALPAPSRTLLLAFLLLLILL. Residues 437-439 lie on the Cytoplasmic side of the membrane; that stretch reads GTL.

Belongs to the peptidase S1 family.

It is found in the membrane. In terms of biological role, may be involved in proteolysis through its threonine endopeptidase activity. This chain is Probable threonine protease PRSS50 (Prss50), found in Mus musculus (Mouse).